Reading from the N-terminus, the 237-residue chain is Demethylmenaquinone methyltransferase (237 aa).

Residues threonine 62, aspartate 80, 102-103, and serine 119 contribute to the S-adenosyl-L-methionine site; that span reads DA.

It belongs to the class I-like SAM-binding methyltransferase superfamily. MenG/UbiE family.

It catalyses the reaction a 2-demethylmenaquinol + S-adenosyl-L-methionine = a menaquinol + S-adenosyl-L-homocysteine + H(+). It functions in the pathway quinol/quinone metabolism; menaquinone biosynthesis; menaquinol from 1,4-dihydroxy-2-naphthoate: step 2/2. Methyltransferase required for the conversion of demethylmenaquinol (DMKH2) to menaquinol (MKH2). The sequence is that of Demethylmenaquinone methyltransferase from Renibacterium salmoninarum (strain ATCC 33209 / DSM 20767 / JCM 11484 / NBRC 15589 / NCIMB 2235).